The primary structure comprises 244 residues: Adiponectin (244 aa).

An N-terminal signal peptide occupies residues 1 to 18 (MLLLGAVLLLLALPGHDQ). Residues Thr21 and Thr22 are each glycosylated (O-linked (GalNAc...) threonine). Lys33 is modified (5-hydroxylysine). At Cys36 the chain carries S-(2-succinyl)cysteine. The tract at residues 40 to 101 (MAGIPGHPGH…RGFPGIQGRK (62 aa)) is disordered. Positions 42-107 (GIPGHPGHNG…QGRKGEPGEG (66 aa)) constitute a Collagen-like domain. 3 positions are modified to 4-hydroxyproline: Pro44, Pro47, and Pro53. Residues 55–70 (RDGRDGTPGEKGEKGD) are compositionally biased toward basic and acidic residues. 2 positions are modified to 5-hydroxylysine: Lys65 and Lys68. O-linked (Gal...) hydroxylysine; partial glycosylation is found at Lys65 and Lys68. 4-hydroxyproline; partial occurs at positions 71 and 76. Residue Lys77 is modified to 5-hydroxylysine. Lys77 is a glycosylation site (O-linked (Gal...) hydroxylysine; partial). A 4-hydroxyproline modification is found at Pro91. Pro95 carries the 4-hydroxyproline; partial modification. Lys101 bears the 5-hydroxylysine mark. O-linked (Gal...) hydroxylysine; partial glycosylation is present at Lys101. The C1q domain occupies 108–244 (AYVYRSAFSV…TGFLLYHDTN (137 aa)).

Homomultimer. Forms trimers, hexamers and 12- to 18-mers. The trimers (low molecular weight complexes / LMW) are assembled via non-covalent interactions of the collagen-like domains in a triple helix and hydrophobic interactions within the globular C1q domain. Several trimers can associate to form disulfide-linked hexamers (middle molecular weight complexes / MMW) and larger complexes (higher molecular weight / HMW). The HMW-complex assembly is also modulated by the degree of lysine hydroxylation and glycosylation. LMW, MMW and HMW complexes bind to HBEGF, MMW and HMW complexes bind to PDGFB, and HMW complex binds to FGF2. Interacts with CTRP9 via the C1q domain (heterotrimeric complex). Post-translationally, HMW complexes are more extensively glycosylated than smaller oligomers. Hydroxylation and glycosylation of the lysine residues within the collagen-like domain of adiponectin seem to be critically involved in regulating the formation and/or secretion of HMW complexes and consequently contribute to the insulin-sensitizing activity of adiponectin in hepatocytes. O-glycosylated. Not N-glycosylated. O-linked glycans on hydroxylysines consist of Glc-Gal disaccharides bound to the oxygen atom of post-translationally added hydroxyl groups. Sialylated to varying degrees depending on tissue. Thr-22 appears to be the major site of sialylation. Higher sialylation found in SGBS adipocytes than in HEK fibroblasts. Sialylation is not required neither for heterodimerization nor for secretion. Not sialylated on the glycosylated hydroxylysines. Desialylated forms are rapidly cleared from the circulation. In terms of processing, succination of Cys-36 by the Krebs cycle intermediate fumarate, which leads to S-(2-succinyl)cysteine residues, inhibits polymerization and secretion of adiponectin. Adiponectin is a major target for succination in both adipocytes and adipose tissue of diabetic mammals. It was proposed that succination of proteins is a biomarker of mitochondrial stress and accumulation of Krebs cycle intermediates in adipose tissue in diabetes and that succination of adiponectin may contribute to the decrease in plasma adiponectin in diabetes. As to expression, synthesized exclusively by adipocytes and secreted into plasma.

Its subcellular location is the secreted. Polymerization and secretion of adiponectin is inhibited by succination of cysteine residues by the Krebs cycle intermediate fumarate, which leads to S-(2-succinyl)cysteine residues. In terms of biological role, important adipokine involved in the control of fat metabolism and insulin sensitivity, with direct anti-diabetic, anti-atherogenic and anti-inflammatory activities. Stimulates AMPK phosphorylation and activation in the liver and the skeletal muscle, enhancing glucose utilization and fatty-acid combustion. Antagonizes TNF-alpha by negatively regulating its expression in various tissues such as liver and macrophages, and also by counteracting its effects. Inhibits endothelial NF-kappa-B signaling through a cAMP-dependent pathway. May play a role in cell growth, angiogenesis and tissue remodeling by binding and sequestering various growth factors with distinct binding affinities, depending on the type of complex, LMW, MMW or HMW. The polypeptide is Adiponectin (ADIPOQ) (Homo sapiens (Human)).